Consider the following 344-residue polypeptide: MATSVKKLLAGLSGEVFKVPPVWMMRQAGRHLPEYLETRARSKDFLDFCYTPSLASEATLQPIRRYGMDGAILFADILLILDAMGLKVAFEKGEGPLVEQINGPSDLARVSPQKAADRLSPVYETVSRVKAALPAQTTLIGFAGSPWTVSLYAIEGRGKTDKSTAWRWAHGRPDDLAAVMDLVAEATAEYLARQVEAGAEALMLFDSWAEGLPDNIFREVVIAPTRKLVALLRERGITVPIIGFPRGAGVMLPEYVRETGVTAVGLDTAASPAFINAELAKGFPVQGHLDPLLLIEGGARLDARVRELLDAYRGRPHIFNLGHGVRPETPIAHVERVLELIRNA.

Substrate is bound by residues Arg26 to Arg30, Asp76, Tyr152, Ser207, and His323.

Belongs to the uroporphyrinogen decarboxylase family. Homodimer.

The protein resides in the cytoplasm. It carries out the reaction uroporphyrinogen III + 4 H(+) = coproporphyrinogen III + 4 CO2. It functions in the pathway porphyrin-containing compound metabolism; protoporphyrin-IX biosynthesis; coproporphyrinogen-III from 5-aminolevulinate: step 4/4. Its function is as follows. Catalyzes the decarboxylation of four acetate groups of uroporphyrinogen-III to yield coproporphyrinogen-III. This Hyphomonas neptunium (strain ATCC 15444) protein is Uroporphyrinogen decarboxylase.